The sequence spans 703 residues: Glycogen [starch] synthase, liver (703 aa).

Ser8 carries the phosphoserine; by PKA modification. A Phosphoserine modification is found at Ser11. Position 40 (Lys40) interacts with UDP. Residues His205 and Arg211 each contribute to the UDP-alpha-D-glucose site. Residues His291, Glu292, Gln294, His297, and Lys301 each contribute to the alpha-D-glucose 6-phosphate site. UDP is bound at residue Arg331. A UDP-alpha-D-glucose-binding site is contributed by Arg331. His501 contributes to the alpha-D-glucose 6-phosphate binding site. UDP-alpha-D-glucose is bound by residues Glu510, Trp512, and Gly513. Thr515 contributes to the UDP binding site. Alpha-D-glucose 6-phosphate-binding residues include Arg582 and Arg586. Ser627 carries the post-translational modification Phosphoserine. The segment at 628–703 (PPTTEGFKYP…KKKLHGEYKN (76 aa)) is disordered. A phosphoserine; by GSK3-alpha and GSK3-beta mark is found at Ser641, Ser645, Ser649, and Ser653. Residues 647–657 (SGSQASSPQSS) are compositionally biased toward low complexity. The residue at position 657 (Ser657) is a Phosphoserine; by CK2. Positions 658–674 (DVEDEVEDERYDEEEEA) are enriched in acidic residues. The residue at position 683 (Ser683) is a Phosphoserine.

It belongs to the glycosyltransferase 3 family. Part of the glycogen synthase (GS)-glycogenin complex, a heterooctamer composed of a tetramer of GS and 2 dimers of glycogenin, where each GS protomer binds to one glycogenin subunit (via glycogenin C-terminus); the GS tetramer may dissociate from glycogenin dimers to continue glycogen polymerization on its own. May also form a heterooctamer complex with GYG1 (via GYG1 C-terminus). Primed phosphorylation at Ser-657 (site 5) by CSNK2A1 and CSNK2A2 is required for inhibitory phosphorylation at Ser-641 (site 3a), Ser-645 (site 3b), Ser-649 (site 3c) and Ser-653 (site 4) by GSK3A an GSK3B. Dephosphorylation at Ser-641 and Ser-645 by PP1 activates the enzyme. Phosphorylation at Ser-8 is not required for interaction with GYG1. Interaction with GYG1 does not regulate the phosphorylation at Ser-8 and Ser-641. Specifically expressed in liver (at protein level).

The catalysed reaction is [(1-&gt;4)-alpha-D-glucosyl](n) + UDP-alpha-D-glucose = [(1-&gt;4)-alpha-D-glucosyl](n+1) + UDP + H(+). It participates in glycan biosynthesis; glycogen biosynthesis. With respect to regulation, allosteric activation by glucose-6-phosphate. Phosphorylation reduces the activity towards UDP-glucose. When in the non-phosphorylated state, glycogen synthase does not require glucose-6-phosphate as an allosteric activator; when phosphorylated it does. Its function is as follows. Glycogen synthase participates in the glycogen biosynthetic process along with glycogenin and glycogen branching enzyme. Extends the primer composed of a few glucose units formed by glycogenin by adding new glucose units to it. In this context, glycogen synthase transfers the glycosyl residue from UDP-Glc to the non-reducing end of alpha-1,4-glucan. The sequence is that of Glycogen [starch] synthase, liver from Homo sapiens (Human).